A 279-amino-acid polypeptide reads, in one-letter code: MKRIFLFLATNIAVLVVINIVLAVLGINSRGGAGSLLAYSAVVGFTGSIISLLMSKFIAKQSVGAEVIDTPRTEEEAWLLNTVEAQARQWNLKTPEVAIYHSPEPNAFATGASRNSSLIAVSTGLLDHMTRDEVEAVLAHEMAHVGNGDMVTLTLIQGVVNTFVVFLSRIIANLIARNNDGSQSQGTYFLVSMVFQILFGFLASLIVMWFSRQREYRADAGAAKLVGAPKMISALQRLKGNPVDLPEEMNAMGIAGDTRDSLLSTHPSLDNRIARLKSL.

Helical transmembrane passes span 4–24 and 34–54; these read IFLFLATNIAVLVVINIVLAV and GSLLAYSAVVGFTGSIISLLM. Zn(2+) is bound at residue histidine 140. The active site involves glutamate 141. Histidine 144 provides a ligand contact to Zn(2+). Helical transmembrane passes span 155 to 175 and 189 to 209; these read LIQGVVNTFVVFLSRIIANLI and FLVSMVFQILFGFLASLIVMW. Glutamate 215 contributes to the Zn(2+) binding site.

Belongs to the peptidase M48B family. It depends on Zn(2+) as a cofactor.

Its subcellular location is the cell inner membrane. In Neisseria gonorrhoeae (strain ATCC 700825 / FA 1090), this protein is Protease HtpX homolog.